The chain runs to 594 residues: MRETLEALNSLGFSVGQPEMAPQSEPRDGFSNAQEKMSSRGESTLHSCSGHETPGQKEGIHTEQAEAPCMGSQASTPQKAEPAGSVPGEEWMIRKVKVEDEDQEAEEEVEWPQHLSFLPSPFPTPDLGQLAVTYKLEPGTPGALGGIALSGWAPIPEKPYGCEECERRFRDQLTLRLHQRLHRGEGPCACPDCGRSFTQRAHMLLHQRSHRGERPFPCSECDKRFSKKAHLTRHLRTHTGERPYPCAECGKRFSQKIHLGSHQKTHTGERPFPCTECEKRFRKKTHLIRHQRIHTGERPYQCTQCTRSFTHKQHLVRHQRVHDAASRTRSSPDIPVAPHSPTASLTPSPPGPKPFACSHCGQSFGWKKNLATHQSLHLTEGRPFGCDECALGTNVDPAAEPSACTPHAPDCGPGSGPAAPQRTTSSERSFFCPDCGRGFAHGQHLARHRRVHTGERPFACAQCGRRFGSRPNLVAHSRAHSGARPFACAQCGRRFSRKSHLGRHQAVHTGSRPHACAVCARCFSSKTNLVRHQAIHTGSRPFSCPQCAKSFSRKTHLVRHQRIHGDAALPAPASNLSAPAWSNPSEVVPPPIFF.

The disordered stretch occupies residues 1–86 (MRETLEALNS…PQKAEPAGSV (86 aa)). The segment at 1 to 183 (MRETLEALNS…TLRLHQRLHR (183 aa)) is interaction with STAT3. The segment covering 31 to 47 (SNAQEKMSSRGESTLHS) has biased composition (polar residues). Residues 54–64 (PGQKEGIHTEQ) are compositionally biased toward basic and acidic residues. Residue Lys-97 forms a Glycyl lysine isopeptide (Lys-Gly) (interchain with G-Cter in SUMO2) linkage. 12 consecutive C2H2-type zinc fingers follow at residues 160–182 (YGCEECERRFRDQLTLRLHQRLH), 188–210 (CACPDCGRSFTQRAHMLLHQRSH), 216–238 (FPCSECDKRFSKKAHLTRHLRTH), 244–266 (YPCAECGKRFSQKIHLGSHQKTH), 272–294 (FPCTECEKRFRKKTHLIRHQRIH), 300–322 (YQCTQCTRSFTHKQHLVRHQRVH), 355–377 (FACSHCGQSFGWKKNLATHQSLH), 430–452 (FFCPDCGRGFAHGQHLARHRRVH), 458–480 (FACAQCGRRFGSRPNLVAHSRAH), 486–508 (FACAQCGRRFSRKSHLGRHQAVH), 514–536 (HACAVCARCFSSKTNLVRHQAIH), and 542–564 (FSCPQCAKSFSRKTHLVRHQRIH). The disordered stretch occupies residues 313-351 (QHLVRHQRVHDAASRTRSSPDIPVAPHSPTASLTPSPPG). Lys-368 is covalently cross-linked (Glycyl lysine isopeptide (Lys-Gly) (interchain with G-Cter in SUMO2)).

This sequence belongs to the krueppel C2H2-type zinc-finger protein family. Interacts with STAT3. Enhances STAT3 activity by keeping it in the nucleus.

The protein resides in the nucleus. Functionally, transcription factor that promotes adipocyte differentiation and suppresses osteoblast differentiation in the bone marrow. Enhances the osteoclast-supporting ability of stromal cells. Binds with STAT3 the consensus sequence 5'-CTTCTGGGAAGA-3' of the acute phase response element (APRE). Transactivates several promoters including FOS, OSM and PPARG. Recruits a histone deacetylase complex. In Mus musculus (Mouse), this protein is Zinc finger protein 467 (Znf467).